We begin with the raw amino-acid sequence, 263 residues long: Type II restriction enzyme TaqI (263 aa).

Only 15% of purified enzyme (upon expression in E.coli) can be sequenced, suggesting the remainder has a blocked N-terminus.

It carries out the reaction Endonucleolytic cleavage of DNA to give specific double-stranded fragments with terminal 5'-phosphates.. Its function is as follows. A P subtype restriction enzyme that recognizes the double-stranded sequence 5'-TCGA-3' and cleaves after T-1. The polypeptide is Type II restriction enzyme TaqI (taqIR) (Thermus aquaticus).